Here is a 437-residue protein sequence, read N- to C-terminus: Glutamate-1-semialdehyde 2,1-aminomutase (437 aa).

An N6-(pyridoxal phosphate)lysine modification is found at lysine 274.

The protein belongs to the class-III pyridoxal-phosphate-dependent aminotransferase family. HemL subfamily. As to quaternary structure, homodimer. Pyridoxal 5'-phosphate is required as a cofactor.

It localises to the cytoplasm. The enzyme catalyses (S)-4-amino-5-oxopentanoate = 5-aminolevulinate. Its pathway is porphyrin-containing compound metabolism; protoporphyrin-IX biosynthesis; 5-aminolevulinate from L-glutamyl-tRNA(Glu): step 2/2. This is Glutamate-1-semialdehyde 2,1-aminomutase from Paracidovorax citrulli (strain AAC00-1) (Acidovorax citrulli).